A 678-amino-acid chain; its full sequence is uncharacterized protein (678 aa).

2 helical membrane-spanning segments follow: residues 14 to 34 (LMFAGAGPGPMLAAASAWTGL) and 180 to 200 (GAVIIAGFPFLDLGNVTIGGF).

The protein belongs to the mycobacterial PPE family.

It localises to the cell membrane. This is an uncharacterized protein from Mycobacterium tuberculosis (strain CDC 1551 / Oshkosh).